The following is a 381-amino-acid chain: Succinyl-diaminopimelate desuccinylase (381 aa).

Histidine 68 contributes to the Zn(2+) binding site. Aspartate 70 is a catalytic residue. Aspartate 101 contributes to the Zn(2+) binding site. Glutamate 135 functions as the Proton acceptor in the catalytic mechanism. Zn(2+)-binding residues include glutamate 136, glutamate 164, and histidine 350.

The protein belongs to the peptidase M20A family. DapE subfamily. In terms of assembly, homodimer. Requires Zn(2+) as cofactor. Co(2+) is required as a cofactor.

It catalyses the reaction N-succinyl-(2S,6S)-2,6-diaminopimelate + H2O = (2S,6S)-2,6-diaminopimelate + succinate. It participates in amino-acid biosynthesis; L-lysine biosynthesis via DAP pathway; LL-2,6-diaminopimelate from (S)-tetrahydrodipicolinate (succinylase route): step 3/3. Functionally, catalyzes the hydrolysis of N-succinyl-L,L-diaminopimelic acid (SDAP), forming succinate and LL-2,6-diaminopimelate (DAP), an intermediate involved in the bacterial biosynthesis of lysine and meso-diaminopimelic acid, an essential component of bacterial cell walls. This is Succinyl-diaminopimelate desuccinylase from Neisseria meningitidis serogroup C (strain 053442).